Here is a 328-residue protein sequence, read N- to C-terminus: WUSCHEL-related homeobox 6 (328 aa).

The span at 1–11 shows a compositional bias: polar residues; sequence MEGSSNSPDRQ. The segment at 1–45 is disordered; the sequence is MEGSSNSPDRQSSGGSPPEERGGGGSGGGGGRSAAGEPVRSRWTP. Gly residues predominate over residues 23-33; sequence GGGSGGGGGRS. The segment at residues 38-102 is a DNA-binding region (homeobox; WUS-type); it reads PVRSRWTPKP…NRRSRSRRRQ (65 aa).

Belongs to the WUS homeobox family.

The protein resides in the nucleus. Its function is as follows. Transcription factor which may be involved in developmental processes. In Oryza sativa subsp. japonica (Rice), this protein is WUSCHEL-related homeobox 6 (WOX6).